The primary structure comprises 339 residues: Dihydroorotate dehydrogenase (quinone) (339 aa).

FMN-binding positions include 62–66 and threonine 86; that span reads AGMDK. Lysine 66 provides a ligand contact to substrate. 111-115 contacts substrate; the sequence is NRMGF. Residues asparagine 139 and asparagine 172 each contribute to the FMN site. Residue asparagine 172 participates in substrate binding. Serine 175 serves as the catalytic Nucleophile. Position 177 (asparagine 177) interacts with substrate. Lysine 217 and threonine 245 together coordinate FMN. Residue 246 to 247 coordinates substrate; sequence NT. FMN contacts are provided by residues glycine 268, glycine 297, and 318-319; that span reads YS.

It belongs to the dihydroorotate dehydrogenase family. Type 2 subfamily. As to quaternary structure, monomer. FMN is required as a cofactor.

It localises to the cell membrane. It carries out the reaction (S)-dihydroorotate + a quinone = orotate + a quinol. It participates in pyrimidine metabolism; UMP biosynthesis via de novo pathway; orotate from (S)-dihydroorotate (quinone route): step 1/1. Its function is as follows. Catalyzes the conversion of dihydroorotate to orotate with quinone as electron acceptor. This chain is Dihydroorotate dehydrogenase (quinone), found in Shewanella putrefaciens (strain CN-32 / ATCC BAA-453).